We begin with the raw amino-acid sequence, 1103 residues long: Kinesin-like protein KIF1C (1103 aa).

Residues serine 5–isoleucine 348 enclose the Kinesin motor domain. Glycine 97–serine 104 is a binding site for ATP. Serine 295 carries the phosphoserine modification. Coiled coils occupy residues asparagine 359–glutamate 388 and glutamate 438–methionine 479. The segment at alanine 400–glutamate 438 is disordered. The residue at position 494 (serine 494) is a Phosphoserine. The 68-residue stretch at threonine 523–glycine 590 folds into the FHA domain. A coiled-coil region spans residues glutamate 633–serine 674. Serine 674 and serine 676 each carry phosphoserine. Disordered regions lie at residues glycine 808–alanine 828, leucine 874–valine 924, and glutamine 950–valine 1103. A compositionally biased stretch (gly residues) spans glycine 813–glutamate 822. Positions alanine 828 to isoleucine 872 form a coiled coil. Positions proline 893–serine 910 are enriched in low complexity. Serine 915 is modified (phosphoserine). The span at glutamine 953–leucine 962 shows a compositional bias: gly residues. Residues proline 1021–arginine 1031 are compositionally biased toward basic residues. Position 1033 is a phosphoserine (serine 1033). An Omega-N-methylarginine modification is found at arginine 1041. Pro residues predominate over residues proline 1062 to threonine 1083. Residue threonine 1083 is modified to Phosphothreonine. At serine 1092 the chain carries Phosphoserine. The segment covering serine 1092–valine 1103 has biased composition (basic and acidic residues).

It belongs to the TRAFAC class myosin-kinesin ATPase superfamily. Kinesin family. Unc-104 subfamily. As to quaternary structure, monomer. Interacts with BICD2. Post-translationally, phosphorylated on tyrosine residues. As to expression, expressed in all tissues examined, with most abundant expression in heart and skeletal muscle.

Its subcellular location is the cytoplasm. It is found in the cytoskeleton. Motor required for the retrograde transport of Golgi vesicles to the endoplasmic reticulum. Has a microtubule plus end-directed motility. The chain is Kinesin-like protein KIF1C (KIF1C) from Homo sapiens (Human).